The chain runs to 577 residues: Pentatricopeptide repeat-containing protein At2g01390 (577 aa).

PPR repeat units follow at residues 121–155 (DHFT…GVLI), 156–190 (DTVT…GCEP), 191–225 (TVVS…RVSP), 226–260 (NCHT…GVQP), 261–295 (DKAA…GVVL), 382–416 (DSFV…GIHL), 417–451 (KKSA…QHSL), 452–482 (GCYQ…LPDD), 485–519 (GVAA…EIMP), and 520–554 (SLGT…LVAS).

It belongs to the PPR family. P subfamily.

This chain is Pentatricopeptide repeat-containing protein At2g01390, found in Arabidopsis thaliana (Mouse-ear cress).